Consider the following 189-residue polypeptide: MMNTLNIDFQKTALVIIDLQKGIVPIDQSGQVVPNAKKLVDEFRKHNGFISFVNVAFHDGADALKPQTDEPAQGGSGEMPADWAEFVPEIGVQDGDYTVTKRQWGAFFGTDLDLQLRRRGIDTIVLCGIATNIGVESTAREAFQLGYQQIFITDAMSTFSDEEHEATLRFIFPRIGKSRTTEEFLEQVK.

This sequence belongs to the isochorismatase family.

This is an uncharacterized protein from Bacillus subtilis (strain 168).